We begin with the raw amino-acid sequence, 342 residues long: MKSFASLLFLAATAAAHATWQQIWVNGVDGGTSCLRRAANNNPIDVGAKELACNAHTLSPNVCTIKPGDKVTVEMHAQHGDRSCAQEAIGGNHYGPVMVYMAKVDDARTADANAADWFKVSEMGMASNNPVYWAVQVLNDNCGHWTFTVPDLAPGNYLIRSEVIALHVAGSIGGAQFYPGCFQVNVVGNGSGRPTETVKFPGAYKATDPGVLFDMYRPQSTYIIPGPRPYGTSPATVANTPYPTTATWNTALQPTTVPTVTPPVGGGTNPPPVTTVAPPVVTSQPPVPPTTQQPPVVTPTAPPSGPLQTQYGQCGGQGWNGPTQCQPPYTCTASNQWYHQCL.

Residues 1-18 (MKSFASLLFLAATAAAHA) form the signal peptide. Residue histidine 17 coordinates Cu(2+). Residues threonine 19 and threonine 57 each carry the phosphothreonine modification. Serine 59 is modified (phosphoserine). Cysteines 63 and 181 form a disulfide. Residue histidine 93 coordinates Cu(2+). Residues histidine 167 and glutamine 176 each contribute to the O2 site. Tyrosine 178 is a Cu(2+) binding site. An N-linked (GlcNAc...) asparagine glycan is attached at asparagine 189. The tract at residues 233–263 (SPATVANTPYPTTATWNTALQPTTVPTVTPP) is X282 extension. The segment at 281–302 (VTSQPPVPPTTQQPPVVTPTAP) is disordered. Pro residues predominate over residues 285–302 (PPVPPTTQQPPVVTPTAP). The CBM1 domain maps to 306-342 (PLQTQYGQCGGQGWNGPTQCQPPYTCTASNQWYHQCL).

The protein belongs to the polysaccharide monooxygenase AA9 family. Cu(2+) is required as a cofactor.

Its subcellular location is the secreted. The enzyme catalyses [(1-&gt;4)-beta-D-glucosyl]n+m + reduced acceptor + O2 = 4-dehydro-beta-D-glucosyl-[(1-&gt;4)-beta-D-glucosyl]n-1 + [(1-&gt;4)-beta-D-glucosyl]m + acceptor + H2O.. Its function is as follows. Lytic polysaccharide monooxygenase (LPMO) that depolymerizes crystalline and amorphous polysaccharides via the oxidation of scissile alpha- or beta-(1-4)-glycosidic bonds, yielding C1 oxidation products. Catalysis by LPMOs requires the reduction of the active-site copper from Cu(II) to Cu(I) by a reducing agent and H(2)O(2) or O(2) as a cosubstrate. Shows only weak binding properties to cellulose, and low cellulolytic oxidative activity which questions the involvement of X282 extension-containing AA9 proteins in the degradation of plant cell wall and opens new avenues as to the divergence of function of some AA9 members. The chain is AA9 family lytic polysaccharide monooxygenase AA9-X282 from Coprinopsis cinerea (strain Okayama-7 / 130 / ATCC MYA-4618 / FGSC 9003) (Inky cap fungus).